The primary structure comprises 98 residues: C-X-C motif chemokine 10 (98 aa).

Residues 1–21 (MNPSAAVIFCLILLGLSGTQG) form the signal peptide. Position 26 is a citrulline (Arg-26). Intrachain disulfides connect Cys-30/Cys-57 and Cys-32/Cys-74.

The protein belongs to the intercrine alpha (chemokine CxC) family. Monomer, dimer, and tetramer. Interacts with CXCR3 (via N-terminus). As to expression, expressed in the spleen, thymus, lymph nodes and liver. Expressed in astrocytes, microglia, and neurons.

It is found in the secreted. Pro-inflammatory cytokine that is involved in a wide variety of processes such as chemotaxis, differentiation, and activation of peripheral immune cells, regulation of cell growth, apoptosis and modulation of angiostatic effects. Plays thereby an important role during viral infections by stimulating the activation and migration of immune cells to the infected sites. Mechanistically, binding of CXCL10 to the CXCR3 receptor activates G protein-mediated signaling and results in downstream activation of phospholipase C-dependent pathway, an increase in intracellular calcium production and actin reorganization. In turn, recruitment of activated Th1 lymphocytes occurs at sites of inflammation. Activation of the CXCL10/CXCR3 axis also plays an important role in neurons in response to brain injury for activating microglia, the resident macrophage population of the central nervous system, and directing them to the lesion site. This recruitment is an essential element for neuronal reorganization. The protein is C-X-C motif chemokine 10 (Cxcl10) of Mus musculus (Mouse).